A 665-amino-acid polypeptide reads, in one-letter code: F-box/WD repeat-containing protein lin-23 (665 aa).

The F-box domain maps to 81 to 127 (RDFISNLPAHLVELILFNVNSDSLKSCEEVSTSWRCALARGQHWKKL). WD repeat units lie at residues 220–257 (ENSK…CSRI), 260–299 (GHTG…KTLI), 301–337 (HCEA…DITI), 343–380 (GHRA…FVRT), 383–420 (GHRR…CLRV), 423–460 (GHEE…DPRA), and 472–509 (QHTG…PSGL). The segment at 574 to 665 (AAAEAARGAG…VDEEMPDGGP (92 aa)) is disordered. 2 stretches are compositionally biased toward acidic residues: residues 584–595 (DNDESSSEEDLD) and 655–665 (DVDEEMPDGGP).

Part of a SCF (SKP1-cullin-F-box) protein ligase complex.

The protein resides in the cytoplasm. Functions cell autonomously to negatively regulate cell cycle progression. Required to restrain cell proliferation in response to developmental cues. Probably recognizes and binds to some proteins and promotes their ubiquitination and degradation. The polypeptide is F-box/WD repeat-containing protein lin-23 (lin-23) (Caenorhabditis elegans).